Here is a 113-residue protein sequence, read N- to C-terminus: uncharacterized protein (113 aa).

The signal sequence occupies residues 1–19 (MLSPLSPRIIAAFTTAVGA).

The protein to M.tuberculosis Rv1291c.

This is an uncharacterized protein from Mycobacterium tuberculosis (strain CDC 1551 / Oshkosh).